The sequence spans 455 residues: Probable glycine dehydrogenase (decarboxylating) subunit 1 (455 aa).

It belongs to the GcvP family. N-terminal subunit subfamily. In terms of assembly, the glycine cleavage system is composed of four proteins: P, T, L and H. In this organism, the P 'protein' is a heterodimer of two subunits.

It carries out the reaction N(6)-[(R)-lipoyl]-L-lysyl-[glycine-cleavage complex H protein] + glycine + H(+) = N(6)-[(R)-S(8)-aminomethyldihydrolipoyl]-L-lysyl-[glycine-cleavage complex H protein] + CO2. The glycine cleavage system catalyzes the degradation of glycine. The P protein binds the alpha-amino group of glycine through its pyridoxal phosphate cofactor; CO(2) is released and the remaining methylamine moiety is then transferred to the lipoamide cofactor of the H protein. This Francisella tularensis subsp. novicida (strain U112) protein is Probable glycine dehydrogenase (decarboxylating) subunit 1.